The chain runs to 851 residues: DNA mismatch repair protein MutS (851 aa).

An ATP-binding site is contributed by 614–621 (GPNMGGKS).

It belongs to the DNA mismatch repair MutS family.

This protein is involved in the repair of mismatches in DNA. It is possible that it carries out the mismatch recognition step. This protein has a weak ATPase activity. The protein is DNA mismatch repair protein MutS of Yersinia pestis.